A 273-amino-acid polypeptide reads, in one-letter code: Large ribosomal subunit protein uL2 (273 aa).

The tract at residues Arg221–Lys273 is disordered. Over residues Lys253–Lys273 the composition is skewed to basic residues.

It belongs to the universal ribosomal protein uL2 family. As to quaternary structure, part of the 50S ribosomal subunit. Forms a bridge to the 30S subunit in the 70S ribosome.

Its function is as follows. One of the primary rRNA binding proteins. Required for association of the 30S and 50S subunits to form the 70S ribosome, for tRNA binding and peptide bond formation. It has been suggested to have peptidyltransferase activity; this is somewhat controversial. Makes several contacts with the 16S rRNA in the 70S ribosome. This is Large ribosomal subunit protein uL2 from Glaesserella parasuis serovar 5 (strain SH0165) (Haemophilus parasuis).